We begin with the raw amino-acid sequence, 361 residues long: MKTTPFTEKHIALGAKMHEFAGYNMPIEYSGIIDEHLTVCNAVGVFDVSHMGEFWVKGPQALAFLQKVTSNNVAALVPGKIQYTCFPNEEGGIVDDLLVYCYEPEKYLLVVNAANIEKDWNWCVSHNTEGAELENSSDNMAQLAVQGPKAILALQKLTDIDLSAIPYYTFTVGRFAGKENVIISNTGYTGAGGFELYFYPDAAEAIWKAVFEAGEEFGIKPVGLGARDTLRLEMGFCLYGNDLDDKTSPIEAGLGWITKFVEGKEFINRPMLEKQKSEGTTRKLVGFEMIDRGIPRHGYELVNEEGEGIGVVTSGTMSPTRKIGIGMGYVKPEYAKVGTEICIDMRGRKLKAIVVKPPFRK.

It belongs to the GcvT family. As to quaternary structure, the glycine cleavage system is composed of four proteins: P, T, L and H.

The catalysed reaction is N(6)-[(R)-S(8)-aminomethyldihydrolipoyl]-L-lysyl-[protein] + (6S)-5,6,7,8-tetrahydrofolate = N(6)-[(R)-dihydrolipoyl]-L-lysyl-[protein] + (6R)-5,10-methylene-5,6,7,8-tetrahydrofolate + NH4(+). Its function is as follows. The glycine cleavage system catalyzes the degradation of glycine. This is Aminomethyltransferase from Bacteroides thetaiotaomicron (strain ATCC 29148 / DSM 2079 / JCM 5827 / CCUG 10774 / NCTC 10582 / VPI-5482 / E50).